The chain runs to 275 residues: Gibberellin-regulated protein 14 (275 aa).

Positions 1–21 (MALSLLSVFIFFHVFTNVVFA) are cleaved as a signal peptide. The disordered stretch occupies residues 34 to 207 (PTPTLPSPSP…TAPPVKPPTP (174 aa)). Over residues 36–207 (PTLPSPSPAT…TAPPVKPPTP (172 aa)) the composition is skewed to pro residues.

The protein belongs to the GASA family. Six disulfide bonds may be present. In terms of tissue distribution, expressed in flower abscission zone, style, stamen filaments and lateral roots.

Its subcellular location is the secreted. Functionally, gibberellin-regulated protein that may function in hormonal controlled steps of development such as seed germination, flowering and seed maturation. This Arabidopsis thaliana (Mouse-ear cress) protein is Gibberellin-regulated protein 14 (GASA14).